A 102-amino-acid chain; its full sequence is MAGQKIRVKLKAFDHRLIDQSTYEIVATAKRTGATVSGPIPLPTKKEIYTVLRSPHVNKKSREQFELKTHKRLIDILDTNEDTVEALMKLQLPAGVSVDIKS.

This sequence belongs to the universal ribosomal protein uS10 family. Part of the 30S ribosomal subunit.

Involved in the binding of tRNA to the ribosomes. This chain is Small ribosomal subunit protein uS10, found in Leptospira borgpetersenii serovar Hardjo-bovis (strain JB197).